The chain runs to 324 residues: Adipolin (324 aa).

The N-terminal stretch at 1-24 (MRCWVWLLVAIVLCQQLSVVRVLA) is a signal peptide. Disordered stretches follow at residues 28–66 (ERKK…DPGL) and 83–121 (GANS…MPGA). Residues 40-49 (EPFNVSLSNS) are compositionally biased toward polar residues. The N-linked (GlcNAc...) asparagine glycan is linked to N43. Over residues 50–60 (EELHETDKLSE) the composition is skewed to basic and acidic residues. The span at 86-98 (SKKKCKGKDKKLR) shows a compositional bias: basic residues. Over residues 103–118 (PPGPPGPQGPPGPPGM) the composition is skewed to pro residues. Residues 169-324 (YRRVDEGFHC…SDFMGILMGL (156 aa)) enclose the C1q domain.

Belongs to the adipolin/erythroferrone family. Homomultimer; disulfide-linked.

The protein resides in the secreted. Its function is as follows. Insulin-sensitizing adipocyte-secreted protein (adipokine) that regulates glucose metabolism in liver and adipose tissue. This Xenopus tropicalis (Western clawed frog) protein is Adipolin (c1qtnf12).